The sequence spans 241 residues: Uridylate kinase (241 aa).

12–15 (KLSG) is an ATP binding site. The segment at 20 to 25 (GDKGVG) is involved in allosteric activation by GTP. Position 54 (glycine 54) interacts with UMP. Residues glycine 55 and arginine 59 each coordinate ATP. Residues aspartate 74 and 135 to 142 (IGSPYFST) each bind UMP. 3 residues coordinate ATP: asparagine 163, tyrosine 169, and aspartate 172.

The protein belongs to the UMP kinase family. In terms of assembly, homohexamer.

It is found in the cytoplasm. The enzyme catalyses UMP + ATP = UDP + ADP. The protein operates within pyrimidine metabolism; CTP biosynthesis via de novo pathway; UDP from UMP (UMPK route): step 1/1. Its activity is regulated as follows. Allosterically activated by GTP. Inhibited by UTP. Functionally, catalyzes the reversible phosphorylation of UMP to UDP. In Streptococcus gordonii (strain Challis / ATCC 35105 / BCRC 15272 / CH1 / DL1 / V288), this protein is Uridylate kinase.